A 174-amino-acid chain; its full sequence is MEGKRSQGQGYMKKKSYLVEEDMETDTDEEEEVGRDRVRGSRGSINRGGSLRLCQVDRCTADMKEAKLYHRRHKVCEVHAKASSVFLSGLNQRFCQQCSRFHDLQEFDEAKRSCRRRLAGHNERRRKSSGESTYGEGSGRRGINGQVVMQNQERSRVEMTLPMPNSSFKRPQIR.

Residues 1-42 (MEGKRSQGQGYMKKKSYLVEEDMETDTDEEEEVGRDRVRGSR) are disordered. Acidic residues predominate over residues 19–33 (VEEDMETDTDEEEEV). The SBP-type zinc-finger motif lies at 51–128 (LRLCQVDRCT…AGHNERRRKS (78 aa)). Cysteine 54, cysteine 59, cysteine 76, histidine 79, cysteine 95, cysteine 98, histidine 102, and cysteine 114 together coordinate Zn(2+). The Bipartite nuclear localization signal motif lies at 111-127 (KRSCRRRLAGHNERRRK). Residues 118-127 (LAGHNERRRK) are compositionally biased toward basic residues. Disordered regions lie at residues 118–148 (LAGH…GQVV) and 155–174 (SRVE…PQIR). A compositionally biased stretch (polar residues) spans 163 to 174 (MPNSSFKRPQIR).

Requires Zn(2+) as cofactor. In terms of tissue distribution, expressed in the rib meristem and inter-primordial tissue of the inflorescence apex.

It is found in the nucleus. The protein resides in the cytoplasm. Trans-acting factor that binds specifically to the consensus nucleotide sequence 5'-TNCGTACAA-3' of AP1 promoter. Promotes both vegetative phase change and flowering. This Arabidopsis thaliana (Mouse-ear cress) protein is Squamosa promoter-binding-like protein 4 (SPL4).